The chain runs to 126 residues: Large ribosomal subunit protein bL12 (126 aa).

This sequence belongs to the bacterial ribosomal protein bL12 family. In terms of assembly, homodimer. Part of the ribosomal stalk of the 50S ribosomal subunit. Forms a multimeric L10(L12)X complex, where L10 forms an elongated spine to which 2 to 4 L12 dimers bind in a sequential fashion. Binds GTP-bound translation factors.

Its function is as follows. Forms part of the ribosomal stalk which helps the ribosome interact with GTP-bound translation factors. Is thus essential for accurate translation. The chain is Large ribosomal subunit protein bL12 from Streptococcus pyogenes serotype M28 (strain MGAS6180).